The sequence spans 225 residues: MNGIRDVVKEEQPRERLLLEGAGSLSNRELLAVLLRTGSKEESVLKLSDKILHHFDGLRMLKDATLEELVSIHGVGVAKATQLIAAFELGRRMVRLEYQNRYSIRSPEDCATYMMEEMRFLQQEHFVCLYLNTKNQVIHRQTIFIGSLNSSIVHPREVFKEAFRRAAASIICLHNHPSGDPAPSREDIEVTKRLVECGRIIGIEVLDHIIIGDHKFVSLKEKGHI.

In terms of domain architecture, MPN spans 103 to 225 (SIRSPEDCAT…FVSLKEKGHI (123 aa)). H174, H176, and D187 together coordinate Zn(2+). Positions 174–187 (HNHPSGDPAPSRED) match the JAMM motif motif.

The protein belongs to the UPF0758 family.

In Bacillus anthracis (strain CDC 684 / NRRL 3495), this protein is UPF0758 protein BAMEG_4721.